Reading from the N-terminus, the 195-residue chain is Imidazoleglycerol-phosphate dehydratase (195 aa).

Belongs to the imidazoleglycerol-phosphate dehydratase family.

It localises to the cytoplasm. The catalysed reaction is D-erythro-1-(imidazol-4-yl)glycerol 3-phosphate = 3-(imidazol-4-yl)-2-oxopropyl phosphate + H2O. Its pathway is amino-acid biosynthesis; L-histidine biosynthesis; L-histidine from 5-phospho-alpha-D-ribose 1-diphosphate: step 6/9. The sequence is that of Imidazoleglycerol-phosphate dehydratase from Pelobacter propionicus (strain DSM 2379 / NBRC 103807 / OttBd1).